The chain runs to 566 residues: Oxygen-dependent choline dehydrogenase (566 aa).

7 to 36 is a binding site for FAD; sequence DYIICGAGSAGNVLATRLTEDPNVTVLLLE. The interval 185–204 is disordered; the sequence is EGFGPMDRTVTPKGRRASTA. His474 serves as the catalytic Proton acceptor.

It belongs to the GMC oxidoreductase family. FAD serves as cofactor.

The catalysed reaction is choline + A = betaine aldehyde + AH2. It catalyses the reaction betaine aldehyde + NAD(+) + H2O = glycine betaine + NADH + 2 H(+). It participates in amine and polyamine biosynthesis; betaine biosynthesis via choline pathway; betaine aldehyde from choline (cytochrome c reductase route): step 1/1. In terms of biological role, involved in the biosynthesis of the osmoprotectant glycine betaine. Catalyzes the oxidation of choline to betaine aldehyde and betaine aldehyde to glycine betaine at the same rate. In Burkholderia vietnamiensis (strain G4 / LMG 22486) (Burkholderia cepacia (strain R1808)), this protein is Oxygen-dependent choline dehydrogenase.